The chain runs to 250 residues: Methionine aminopeptidase (250 aa).

Substrate is bound at residue His77. Asp95, Asp106, and His169 together coordinate a divalent metal cation. His176 contributes to the substrate binding site. Positions 202 and 233 each coordinate a divalent metal cation.

The protein belongs to the peptidase M24A family. Methionine aminopeptidase type 1 subfamily. As to quaternary structure, monomer. Requires Co(2+) as cofactor. The cofactor is Zn(2+). Mn(2+) is required as a cofactor. It depends on Fe(2+) as a cofactor.

It catalyses the reaction Release of N-terminal amino acids, preferentially methionine, from peptides and arylamides.. Functionally, removes the N-terminal methionine from nascent proteins. The N-terminal methionine is often cleaved when the second residue in the primary sequence is small and uncharged (Met-Ala-, Cys, Gly, Pro, Ser, Thr, or Val). Requires deformylation of the N(alpha)-formylated initiator methionine before it can be hydrolyzed. The protein is Methionine aminopeptidase of Clostridium acetobutylicum (strain ATCC 824 / DSM 792 / JCM 1419 / IAM 19013 / LMG 5710 / NBRC 13948 / NRRL B-527 / VKM B-1787 / 2291 / W).